The primary structure comprises 234 residues: Purine nucleoside phosphorylase DeoD-type (234 aa).

A purine D-ribonucleoside is bound at residue H5. Residues G21, R25, R44, and 88 to 91 contribute to the phosphate site; that span reads RIGT. A purine D-ribonucleoside-binding positions include 180–182 and 204–205; these read DME and SD. D205 serves as the catalytic Proton donor.

Belongs to the PNP/UDP phosphorylase family. As to quaternary structure, homohexamer; trimer of homodimers.

It catalyses the reaction a purine D-ribonucleoside + phosphate = a purine nucleobase + alpha-D-ribose 1-phosphate. The enzyme catalyses a purine 2'-deoxy-D-ribonucleoside + phosphate = a purine nucleobase + 2-deoxy-alpha-D-ribose 1-phosphate. In terms of biological role, catalyzes the reversible phosphorolytic breakdown of the N-glycosidic bond in the beta-(deoxy)ribonucleoside molecules, with the formation of the corresponding free purine bases and pentose-1-phosphate. The protein is Purine nucleoside phosphorylase DeoD-type of Buchnera aphidicola subsp. Acyrthosiphon pisum (strain 5A).